The following is a 602-amino-acid chain: Sodium-independent sulfate anion transporter (602 aa).

At 1-47 (MSPPMSPMKPPKGFAPMSCCWSTETMQKWLPFLGWLPDYTWYALKMD) the chain is on the extracellular side. The chain crosses the membrane as a helical span at residues 48-68 (FIAGISVGLTVIPQALAYAEV). Residue A69 is a topological domain, cytoplasmic. The chain crosses the membrane as a helical span at residues 70–90 (GLPPQYGLYSAFMGCFVYFFL). Residues 91–115 (GTSRDVTLGPTAIMSLLVSFYTFHE) lie on the Extracellular side of the membrane. A helical transmembrane segment spans residues 116–136 (PAYAVLLAFLTGCIQLGMGFL). Residues 137-143 (RLGLLLD) are Cytoplasmic-facing. A helical transmembrane segment spans residues 144–164 (FISCPVIKGFTSAAAIIIGFG). At 165-193 (QIKNLLGLQHIPRQFFLQVYYTFHNIGET) the chain is on the extracellular side. A helical transmembrane segment spans residues 194 to 214 (RVGDAVLGLVCMVLLLVLKLM). The Cytoplasmic segment spans residues 215–246 (RDHVPPVHPEMPTGVRLSHGLVWTATTARNAL). Residues 247-267 (VVSFAALVAYSFQVTGYQPFV) traverse the membrane as a helical segment. The Extracellular portion of the chain corresponds to 268-300 (LTGKTPEGLPDAHIPPFSVTTANGTISFTEMVQ). A helical membrane pass occupies residues 301-321 (GMGAGLVVVPLMGLLESIAVA). The Cytoplasmic portion of the chain corresponds to 322-337 (KSFASQNNYRINSNQE). Residues 338-358 (LLALGFTNILGSLFSSYPVTG) traverse the membrane as a helical segment. Topologically, residues 359 to 370 (SFGRTAVNAQSG) are extracellular. Residues 371–391 (VCTPAGGLMTGALVLLSLDYL) form a helical membrane-spanning segment. Residues 392-394 (TSL) are Cytoplasmic-facing. The chain crosses the membrane as a helical span at residues 395 to 415 (FYYIPKSALAAVIIMAVVPLF). Over 416–438 (DTKIVKTLWRVKRLDLLPLCVTF) the chain is Extracellular. Residues 439–459 (LLCFWEVQYGILAGTLVSVLI) traverse the membrane as a helical segment. Residues 460–602 (LLHSVARPKI…PEHKIALLKA (143 aa)) are Cytoplasmic-facing. Residues 466–580 (RPKIQVSEGP…EAEKYLKQEP (115 aa)) enclose the STAS domain.

This sequence belongs to the SLC26A/SulP transporter (TC 2.A.53) family.

It localises to the cell membrane. Its subcellular location is the lysosome membrane. It is found in the apical cell membrane. The protein localises to the basolateral cell membrane. The enzyme catalyses hydrogencarbonate(in) + chloride(out) = hydrogencarbonate(out) + chloride(in). It carries out the reaction sulfate(in) + H(+)(in) = sulfate(out) + H(+)(out). It catalyses the reaction oxalate(in) + chloride(out) = oxalate(out) + chloride(in). Sodium-independent anion exchanger mediating bicarbonate, chloride, sulfate and oxalate transport. Exhibits sodium-independent sulfate anion transporter activity that may cooperate with SLC26A2 to mediate DIDS-sensitive sulfate uptake into high endothelial venules endothelial cells (HEVEC). In the kidney, mediates chloride-bicarbonate exchange, facilitating V-ATPase-mediated acid secretion. May function as a chloride channel, playing an important role in moderating chloride homeostasis and neuronal activity in the cerebellum. In Bos taurus (Bovine), this protein is Sodium-independent sulfate anion transporter.